The following is a 1002-amino-acid chain: Solute carrier family 12 member 3 (1002 aa).

The Cytoplasmic portion of the chain corresponds to 1-135; it reads MAELPVTELP…KSPGEPVRFG (135 aa). Residue Ser41 is modified to Phosphoserine. Position 44 is a phosphothreonine (Thr44). Ser47 is modified (phosphoserine). Residues Thr48, Thr53, and Thr58 each carry the phosphothreonine modification. Phosphoserine occurs at positions 71 and 89. Position 122 is a phosphothreonine (Thr122). Position 124 is a phosphoserine (Ser124). A discontinuously helical transmembrane segment spans residues 136-165; that stretch reads WVKGVMIRCMLNIWGVILYLRLPWITAQAG. Residues Leu146 and Trp149 each coordinate Na(+). The chain crosses the membrane as a helical span at residues 166-187; the sequence is IVLTWLIILLSVMVTSITGLSI. Over 188–218 the chain is Cytoplasmic; that stretch reads SAISTNGKVKSGGTYFLISRSLGPELGGSIG. Residues 219–241 form a helical membrane-spanning segment; that stretch reads LIFAFANAVGVAMHTVGFAETVR. The Extracellular portion of the chain corresponds to 242–253; sequence DLLQEYGTPIVD. A run of 2 helical transmembrane segments spans residues 254-278 and 279-301; these read PIND…AGME and WESK…YLVG. The Extracellular segment spans residues 302-336; that stretch reads TLIPASEDKASKGFYSYHGDIFVQNLVPDWRGIDG. The chain crosses the membrane as a discontinuously helical span at residues 337 to 358; it reads SFFGMFSIFFPSATGILAGANI. Chloride-binding residues include Gly351, Ile352, and Leu353. At 359 to 369 the chain is on the cytoplasmic side; that stretch reads SGDLKDPAVAI. Residues 370 to 391 traverse the membrane as a helical segment; that stretch reads PKGTLMAIFWTTISYLAISATI. At 392 to 451 the chain is on the extracellular side; it reads GSCVVRDASGDVNDTMTPGPGPCEGLACGYGWNFTECSQQRSCRYGLINYYQTMSMVSAF. Asn404 carries an N-linked (GlcNAc...) asparagine glycan. Cys414 and Cys419 are oxidised to a cystine. N-linked (GlcNAc...) asparagine glycosylation is present at Asn424. Cys428 and Cys434 form a disulfide bridge. The chain crosses the membrane as a helical span at residues 452-475; that stretch reads APLITAGIFGATLSSALACLVSAA. Na(+)-binding residues include Ala462, Ser465, and Ser466. The Cytoplasmic segment spans residues 476 to 505; it reads KVFQCLCEDQLYPLIGFFGKGYGKNREPVR. Residues 506 to 520 form a helical membrane-spanning segment; the sequence is GYLLAYAIAVAFIII. At 521–525 the chain is on the extracellular side; that stretch reads AELNT. Residues 526 to 542 form a helical membrane-spanning segment; the sequence is IAPIISNFFLCSYALIN. Residue Tyr538 coordinates chloride. The Cytoplasmic segment spans residues 543-565; sequence FSCFHASITNSPGWRPSFRYYSK. Transmembrane regions (helical) follow at residues 566–585 and 586–597; these read WAAL…LTWW and AALIAIGVVLFL. Residues 598 to 1002 lie on the Cytoplasmic side of the membrane; sequence LLYVIYKKPE…QENVLTFYCQ (405 aa). The scissor helix stretch occupies residues 613–628; it reads SVQAGSYNLALSYSVG. The ATP site is built by Leu646, Arg653, Val675, Gly739, Leu778, and Asn779.

It belongs to the SLC12A transporter family. Homodimer; adopts a domain-swap conformation at the scissor helices connecting the transmembrane domain and C-terminal domain. Interacts with KLHL3. Interacts with IL18R1; this interaction is increased by IL18 treatment. Post-translationally, ubiquitinated; ubiquitination is essential for regulation of endocytosis. Phosphorylated at Thr-53, Thr-58 and Ser-71 by OXSR1/OSR1 and STK39/SPAK downstream of WNK4, promoting its activity. Phosphorylated in response to IL18. In terms of tissue distribution, expressed predominantly in kidney, including in distal tubules (at protein level). Detected at low levels in heart, lung and liver. Not detected in normal aorta, but abundantly expressed in fatty streaks and advanced atherosclerotic lesions. In atherosclerotic lesions, expressed in macrophages, smooth muscle cells and endothelial cells (at protein level).

It localises to the cell membrane. The protein localises to the apical cell membrane. The catalysed reaction is chloride(out) + Na(+)(out) = chloride(in) + Na(+)(in). Its activity is regulated as follows. Phosphorylation by OXSR1/OSR1 and STK39/SPAK in kidney distal convoluted tubules promotes its activity. Also activated by OXSR1/OSR1 and STK39/SPAK downstream of WNK3. Inhibited by thiazide-type diuretic metolazone. Thiazide drugs, such as polythiazide, specifically inhibit SLC12A3/NCC transporter activity by competing with chloride for binding. Electroneutral sodium and chloride ion cotransporter, which acts as a key mediator of sodium and chloride reabsorption in kidney distal convoluted tubules. Also acts as a receptor for the pro-inflammatory cytokine IL18, thereby contributing to IL18-induced cytokine production, including IFNG, IL6, IL18 and CCL2. May act either independently of IL18R1, or in a complex with IL18R1. The chain is Solute carrier family 12 member 3 from Mus musculus (Mouse).